A 178-amino-acid polypeptide reads, in one-letter code: MARADKATAVADIAAQFKESTATLITEYRGLTVANLAELRRSLTGSATYAVAKNTLIKRAASEAGIEGLDELFVGPTAIAFVTGEPVDAAKAIKTFAKEHKALVIKGGYMDGHPLTVAEVERIADLESREVLLAKLAGAMKGNLAKAAGLFNAPASQLARLAAALQEKKACPGPDSAE.

The protein belongs to the universal ribosomal protein uL10 family. Part of the ribosomal stalk of the 50S ribosomal subunit. The N-terminus interacts with L11 and the large rRNA to form the base of the stalk. The C-terminus forms an elongated spine to which L12 dimers bind in a sequential fashion forming a multimeric L10(L12)X complex.

Forms part of the ribosomal stalk, playing a central role in the interaction of the ribosome with GTP-bound translation factors. This chain is Large ribosomal subunit protein uL10, found in Mycobacterium tuberculosis (strain ATCC 25177 / H37Ra).